We begin with the raw amino-acid sequence, 125 residues long: Phosphoribosyl-AMP cyclohydrolase (125 aa).

Residue Asp-74 coordinates Mg(2+). Cys-75 is a Zn(2+) binding site. Asp-76 and Asp-78 together coordinate Mg(2+). 2 residues coordinate Zn(2+): Cys-92 and Cys-99.

It belongs to the PRA-CH family. As to quaternary structure, homodimer. It depends on Mg(2+) as a cofactor. Zn(2+) serves as cofactor.

It is found in the cytoplasm. It carries out the reaction 1-(5-phospho-beta-D-ribosyl)-5'-AMP + H2O = 1-(5-phospho-beta-D-ribosyl)-5-[(5-phospho-beta-D-ribosylamino)methylideneamino]imidazole-4-carboxamide. The protein operates within amino-acid biosynthesis; L-histidine biosynthesis; L-histidine from 5-phospho-alpha-D-ribose 1-diphosphate: step 3/9. In terms of biological role, catalyzes the hydrolysis of the adenine ring of phosphoribosyl-AMP. The polypeptide is Phosphoribosyl-AMP cyclohydrolase (Geobacter sulfurreducens (strain ATCC 51573 / DSM 12127 / PCA)).